Here is a 566-residue protein sequence, read N- to C-terminus: Medium-chain fatty-acid--CoA ligase (566 aa).

ATP is bound at residue 231–242; it reads ILASERAYCARL.

It belongs to the ATP-dependent AMP-binding enzyme family. In terms of assembly, homodimer. It depends on Mg(2+) as a cofactor.

It localises to the cell membrane. The catalysed reaction is hexanoate + ATP + CoA = hexanoyl-CoA + AMP + diphosphate. It catalyses the reaction octanoate + ATP + CoA = octanoyl-CoA + AMP + diphosphate. The enzyme catalyses dodecanoate + ATP + CoA = dodecanoyl-CoA + AMP + diphosphate. Its pathway is lipid metabolism; fatty acid beta-oxidation. Its function is as follows. Catalyzes the esterification, concomitant with transport, of exogenous fatty acids into metabolically active CoA thioesters for subsequent degradation or incorporation into phospholipids. Is maximally active on C6:0, C8:0 and C12:0 fatty acids, while has a low activity on C14-C18 chain length fatty acids. Is involved in the anaerobic beta-oxidative degradation of fatty acids, which allows anaerobic growth of E.coli on fatty acids as a sole carbon and energy source in the presence of nitrate or fumarate as a terminal electron acceptor. Can functionally replace FadD under anaerobic conditions. The chain is Medium-chain fatty-acid--CoA ligase from Escherichia coli (strain K12).